Consider the following 316-residue polypeptide: Protein PXR1 (316 aa).

In terms of domain architecture, G-patch spans 25-71; it reads TSRFGHQYLERMGWKPGKGLGLVEHATTSHVKVSIKDDNLGLGSKLA. The segment at 146 to 280 is disordered; it reads GTTKKRKIDS…DSMLMPKEQL (135 aa). Basic and acidic residues predominate over residues 179–195; sequence DRKEKEEKKTEKENSEI. The span at 196 to 209 shows a compositional bias: basic residues; that stretch reads KKKKKEKKEKKEKK. The segment covering 210–240 has biased composition (basic and acidic residues); it reads EKKDKNEKKEKKDKNEKKEKKDKNEEKEKKE. The segment covering 241–260 has biased composition (basic residues); the sequence is KKEKKEKKDKKDKKDKKDKK. Positions 261 to 270 are enriched in basic and acidic residues; the sequence is EKKEVKEVTR.

This sequence belongs to the PINX1 family.

The protein resides in the nucleus. It localises to the nucleolus. Functionally, involved in rRNA-processing at A0, A1 and A2 sites and negatively regulates telomerase. This Debaryomyces hansenii (strain ATCC 36239 / CBS 767 / BCRC 21394 / JCM 1990 / NBRC 0083 / IGC 2968) (Yeast) protein is Protein PXR1 (PXR1).